Consider the following 400-residue polypeptide: Nicotinate phosphoribosyltransferase (400 aa).

His220 carries the post-translational modification Phosphohistidine; by autocatalysis.

This sequence belongs to the NAPRTase family. Transiently phosphorylated on a His residue during the reaction cycle. Phosphorylation strongly increases the affinity for substrates and increases the rate of nicotinate D-ribonucleotide production. Dephosphorylation regenerates the low-affinity form of the enzyme, leading to product release.

The enzyme catalyses nicotinate + 5-phospho-alpha-D-ribose 1-diphosphate + ATP + H2O = nicotinate beta-D-ribonucleotide + ADP + phosphate + diphosphate. It participates in cofactor biosynthesis; NAD(+) biosynthesis; nicotinate D-ribonucleotide from nicotinate: step 1/1. Catalyzes the synthesis of beta-nicotinate D-ribonucleotide from nicotinate and 5-phospho-D-ribose 1-phosphate at the expense of ATP. The sequence is that of Nicotinate phosphoribosyltransferase from Cronobacter sakazakii (strain ATCC BAA-894) (Enterobacter sakazakii).